The chain runs to 434 residues: UPF0597 protein CLI_2075 (434 aa).

This sequence belongs to the UPF0597 family.

The chain is UPF0597 protein CLI_2075 from Clostridium botulinum (strain Langeland / NCTC 10281 / Type F).